Consider the following 258-residue polypeptide: Imidazole glycerol phosphate synthase subunit HisF (258 aa).

Residues aspartate 11 and aspartate 130 contribute to the active site.

This sequence belongs to the HisA/HisF family. Heterodimer of HisH and HisF.

Its subcellular location is the cytoplasm. It carries out the reaction 5-[(5-phospho-1-deoxy-D-ribulos-1-ylimino)methylamino]-1-(5-phospho-beta-D-ribosyl)imidazole-4-carboxamide + L-glutamine = D-erythro-1-(imidazol-4-yl)glycerol 3-phosphate + 5-amino-1-(5-phospho-beta-D-ribosyl)imidazole-4-carboxamide + L-glutamate + H(+). Its pathway is amino-acid biosynthesis; L-histidine biosynthesis; L-histidine from 5-phospho-alpha-D-ribose 1-diphosphate: step 5/9. IGPS catalyzes the conversion of PRFAR and glutamine to IGP, AICAR and glutamate. The HisF subunit catalyzes the cyclization activity that produces IGP and AICAR from PRFAR using the ammonia provided by the HisH subunit. This is Imidazole glycerol phosphate synthase subunit HisF from Xanthobacter autotrophicus (strain ATCC BAA-1158 / Py2).